The primary structure comprises 127 residues: Ribosome-binding factor A (127 aa).

It belongs to the RbfA family. Monomer. Binds 30S ribosomal subunits, but not 50S ribosomal subunits or 70S ribosomes.

Its subcellular location is the cytoplasm. Its function is as follows. One of several proteins that assist in the late maturation steps of the functional core of the 30S ribosomal subunit. Associates with free 30S ribosomal subunits (but not with 30S subunits that are part of 70S ribosomes or polysomes). Required for efficient processing of 16S rRNA. May interact with the 5'-terminal helix region of 16S rRNA. The protein is Ribosome-binding factor A of Chloroflexus aurantiacus (strain ATCC 29366 / DSM 635 / J-10-fl).